A 133-amino-acid polypeptide reads, in one-letter code: FPRL1 inhibitory protein (133 aa).

An N-terminal signal peptide occupies residues 1–28; the sequence is MKKNITKTIIASTVIAAGLLTQTNDAKA.

This sequence belongs to the CHIPS/FLIPr family.

It is found in the secreted. Its function is as follows. May be involved in countering the first line of host defense mechanisms. Impairs the leukocyte response to FPRL1 agonists by binding directly to host FPRL1. The sequence is that of FPRL1 inhibitory protein (flr) from Staphylococcus aureus (strain USA300).